The following is a 147-amino-acid chain: Phosphoribosyl-AMP cyclohydrolase (147 aa).

Aspartate 91 contributes to the Mg(2+) binding site. Cysteine 92 contacts Zn(2+). Mg(2+) contacts are provided by aspartate 93 and aspartate 95. 2 residues coordinate Zn(2+): cysteine 108 and cysteine 115.

Belongs to the PRA-CH family. In terms of assembly, homodimer. Requires Mg(2+) as cofactor. It depends on Zn(2+) as a cofactor.

It localises to the cytoplasm. The enzyme catalyses 1-(5-phospho-beta-D-ribosyl)-5'-AMP + H2O = 1-(5-phospho-beta-D-ribosyl)-5-[(5-phospho-beta-D-ribosylamino)methylideneamino]imidazole-4-carboxamide. The protein operates within amino-acid biosynthesis; L-histidine biosynthesis; L-histidine from 5-phospho-alpha-D-ribose 1-diphosphate: step 3/9. Its function is as follows. Catalyzes the hydrolysis of the adenine ring of phosphoribosyl-AMP. The sequence is that of Phosphoribosyl-AMP cyclohydrolase from Rhodopseudomonas palustris (strain BisB5).